The sequence spans 339 residues: MDIDLNNQTDNNELIVEDTENPKNPNSTNIEDVGDIGDIEDVGDIGDFENIKKTSVKKISFSPCVFLDLTESEISKYKEHIDKIYLEINQTDYFFENLSLSVKTNDYTNFFNRLGQPHYLLMQKIDDKEIVGSTCIIMRMYVFKCGDKLSRIKYWYISDTRILQEFHKLDLNLKLFKQMYHKLRLKSNRFYTICVDKYQSYTDHLMNKLKIYFNVEFKIDKLLIFLVETTLLRSIEKYFICAYGDIKYMLVPNKTYHIGNKVIKNIYHMQHSRYSSDKSSNISELPINSMVMFCFPEKSPLESIMENLHIKSLITATILSVGMNFFDWHDILTSDIYQI.

Residues 1 to 12 (MDIDLNNQTDNN) show a composition bias toward polar residues. The tract at residues 1–30 (MDIDLNNQTDNNELIVEDTENPKNPNSTNI) is disordered.

This is an uncharacterized protein from Acanthamoeba polyphaga (Amoeba).